The following is a 664-amino-acid chain: DNA ligase (664 aa).

Residues 32–36 and 80–81 contribute to the NAD(+) site; these read DKDYD and SL. The active-site N6-AMP-lysine intermediate is the lysine 122. NAD(+)-binding residues include arginine 144, glutamate 178, and lysine 314. Cysteine 407, cysteine 410, cysteine 423, and cysteine 429 together coordinate Zn(2+). The region spanning 587–664 is the BRCT domain; sequence IKENIFNGKT…SEEDFKNMIG (78 aa).

Belongs to the NAD-dependent DNA ligase family. LigA subfamily. Mg(2+) serves as cofactor. It depends on Mn(2+) as a cofactor.

It carries out the reaction NAD(+) + (deoxyribonucleotide)n-3'-hydroxyl + 5'-phospho-(deoxyribonucleotide)m = (deoxyribonucleotide)n+m + AMP + beta-nicotinamide D-nucleotide.. In terms of biological role, DNA ligase that catalyzes the formation of phosphodiester linkages between 5'-phosphoryl and 3'-hydroxyl groups in double-stranded DNA using NAD as a coenzyme and as the energy source for the reaction. It is essential for DNA replication and repair of damaged DNA. This chain is DNA ligase, found in Clostridium novyi (strain NT).